Consider the following 796-residue polypeptide: Nuclear GTPase SLIP-GC (796 aa).

Position 107-114 (107-114 (GITGAGKS)) interacts with GTP. Coiled coils occupy residues 158-185 (SDQE…EEAD) and 742-776 (GLCK…LRRS).

Its subcellular location is the nucleus speckle. In terms of biological role, nuclear GTPase found in germinal center B-cells, where it may inhibit function of the activation-induced cytidine deaminase AICDA. Reduces somatic hypermutation in B-cells which may enhance genome stability. In Mus musculus (Mouse), this protein is Nuclear GTPase SLIP-GC.